Consider the following 91-residue polypeptide: Elongation factor 1-beta (91 aa).

Homodimer.

In terms of biological role, promotes the exchange of GDP for GTP in EF-1-alpha/GDP, thus allowing the regeneration of EF-1-alpha/GTP that could then be used to form the ternary complex EF-1-alpha/GTP/AAtRNA. This Saccharolobus solfataricus (strain ATCC 35092 / DSM 1617 / JCM 11322 / P2) (Sulfolobus solfataricus) protein is Elongation factor 1-beta (ef1b).